We begin with the raw amino-acid sequence, 174 residues long: Phospholipase A2-like protein Y52B11A.8 (174 aa).

An N-terminal signal peptide occupies residues 1–18; that stretch reads MRGLLVATWIFVSVAASA. 2 N-linked (GlcNAc...) asparagine glycosylation sites follow: N49 and N143. The tract at residues 137 to 174 is disordered; that stretch reads YEASGPNASTTEESPAEKDDYDYESHVAGLNATPSSST.

This sequence belongs to the phospholipase A2 family.

The protein resides in the secreted. This chain is Phospholipase A2-like protein Y52B11A.8, found in Caenorhabditis elegans.